The primary structure comprises 452 residues: Bifunctional protein GlmU (452 aa).

The interval 1–233 (MTDRPFAALI…AWEVAGVNSR (233 aa)) is pyrophosphorylase. Residues 11–14 (LAAG), Lys25, Gln76, 81–82 (GT), 104–106 (YGD), Gly144, Glu159, Asn174, and Asn231 each bind UDP-N-acetyl-alpha-D-glucosamine. Asp106 serves as a coordination point for Mg(2+). Asn231 contacts Mg(2+). The interval 234-254 (AELAAVEAEWQRRRRLAAMAD) is linker. The segment at 255 to 452 (GATLIAPETV…AMKIKKAARK (198 aa)) is N-acetyltransferase. UDP-N-acetyl-alpha-D-glucosamine is bound by residues Arg320 and Lys338. The Proton acceptor role is filled by His350. Residues Tyr353 and Asn364 each coordinate UDP-N-acetyl-alpha-D-glucosamine. Acetyl-CoA is bound by residues Ala367, 373-374 (NY), Ser392, Ala410, and Arg427.

This sequence in the N-terminal section; belongs to the N-acetylglucosamine-1-phosphate uridyltransferase family. In the C-terminal section; belongs to the transferase hexapeptide repeat family. Homotrimer. It depends on Mg(2+) as a cofactor.

The protein localises to the cytoplasm. The enzyme catalyses alpha-D-glucosamine 1-phosphate + acetyl-CoA = N-acetyl-alpha-D-glucosamine 1-phosphate + CoA + H(+). The catalysed reaction is N-acetyl-alpha-D-glucosamine 1-phosphate + UTP + H(+) = UDP-N-acetyl-alpha-D-glucosamine + diphosphate. It participates in nucleotide-sugar biosynthesis; UDP-N-acetyl-alpha-D-glucosamine biosynthesis; N-acetyl-alpha-D-glucosamine 1-phosphate from alpha-D-glucosamine 6-phosphate (route II): step 2/2. It functions in the pathway nucleotide-sugar biosynthesis; UDP-N-acetyl-alpha-D-glucosamine biosynthesis; UDP-N-acetyl-alpha-D-glucosamine from N-acetyl-alpha-D-glucosamine 1-phosphate: step 1/1. The protein operates within bacterial outer membrane biogenesis; LPS lipid A biosynthesis. Functionally, catalyzes the last two sequential reactions in the de novo biosynthetic pathway for UDP-N-acetylglucosamine (UDP-GlcNAc). The C-terminal domain catalyzes the transfer of acetyl group from acetyl coenzyme A to glucosamine-1-phosphate (GlcN-1-P) to produce N-acetylglucosamine-1-phosphate (GlcNAc-1-P), which is converted into UDP-GlcNAc by the transfer of uridine 5-monophosphate (from uridine 5-triphosphate), a reaction catalyzed by the N-terminal domain. In Rhizorhabdus wittichii (strain DSM 6014 / CCUG 31198 / JCM 15750 / NBRC 105917 / EY 4224 / RW1) (Sphingomonas wittichii), this protein is Bifunctional protein GlmU.